Here is a 255-residue protein sequence, read N- to C-terminus: Proteasome subunit alpha (255 aa).

It belongs to the peptidase T1A family. The 20S proteasome core is composed of 14 alpha and 14 beta subunits that assemble into four stacked heptameric rings, resulting in a barrel-shaped structure. The two inner rings, each composed of seven catalytic beta subunits, are sandwiched by two outer rings, each composed of seven alpha subunits. The catalytic chamber with the active sites is on the inside of the barrel. Has a gated structure, the ends of the cylinder being occluded by the N-termini of the alpha-subunits. Is capped at one or both ends by the proteasome regulatory ATPase, PAN.

Its subcellular location is the cytoplasm. With respect to regulation, the formation of the proteasomal ATPase PAN-20S proteasome complex, via the docking of the C-termini of PAN into the intersubunit pockets in the alpha-rings, triggers opening of the gate for substrate entry. Interconversion between the open-gate and close-gate conformations leads to a dynamic regulation of the 20S proteasome proteolysis activity. Functionally, component of the proteasome core, a large protease complex with broad specificity involved in protein degradation. The polypeptide is Proteasome subunit alpha (Natronomonas pharaonis (strain ATCC 35678 / DSM 2160 / CIP 103997 / JCM 8858 / NBRC 14720 / NCIMB 2260 / Gabara) (Halobacterium pharaonis)).